A 93-amino-acid chain; its full sequence is Sec-independent protein translocase protein TatA (93 aa).

A helical membrane pass occupies residues 1-21 (MGIFDWKHWIVILVVVVLVFG). Residues 43–93 (MNDDEKPAEPVVPPAAQPVPPVQPQQSAPLNQPHTIDVQAQKVEEPTRKDS) are disordered. Residues 52-65 (PVVPPAAQPVPPVQ) show a composition bias toward pro residues. Residues 84–93 (KVEEPTRKDS) are compositionally biased toward basic and acidic residues.

The protein belongs to the TatA/E family. In terms of assembly, the Tat system comprises two distinct complexes: a TatABC complex, containing multiple copies of TatA, TatB and TatC subunits, and a separate TatA complex, containing only TatA subunits. Substrates initially bind to the TatABC complex, which probably triggers association of the separate TatA complex to form the active translocon.

The protein localises to the cell inner membrane. In terms of biological role, part of the twin-arginine translocation (Tat) system that transports large folded proteins containing a characteristic twin-arginine motif in their signal peptide across membranes. TatA could form the protein-conducting channel of the Tat system. This is Sec-independent protein translocase protein TatA from Pseudomonas fluorescens (strain ATCC BAA-477 / NRRL B-23932 / Pf-5).